Consider the following 551-residue polypeptide: 2,3-bisphosphoglycerate-independent phosphoglycerate mutase (551 aa).

Residues aspartate 22 and serine 74 each contribute to the Mn(2+) site. The active-site Phosphoserine intermediate is the serine 74. Substrate-binding positions include histidine 135, arginine 165–aspartate 166, arginine 201, arginine 208, and arginine 281–arginine 284. Aspartate 319 provides a ligand contact to Mn(2+). Lysine 356 is a binding site for substrate. Residues aspartate 424, histidine 428, aspartate 465, histidine 466, and histidine 495 each contribute to the Mn(2+) site.

It belongs to the BPG-independent phosphoglycerate mutase family. In terms of assembly, monomer. Mn(2+) serves as cofactor.

The protein resides in the cytoplasm. The enzyme catalyses (2R)-2-phosphoglycerate = (2R)-3-phosphoglycerate. It functions in the pathway carbohydrate degradation; glycolysis; pyruvate from D-glyceraldehyde 3-phosphate: step 3/5. Catalyzes the interconversion of 2-phosphoglycerate (2-PGA) and 3-phosphoglycerate (3-PGA). In Trypanosoma brucei brucei (strain 927/4 GUTat10.1), this protein is 2,3-bisphosphoglycerate-independent phosphoglycerate mutase.